The primary structure comprises 375 residues: Queuine tRNA-ribosyltransferase (375 aa).

Aspartate 89 acts as the Proton acceptor in catalysis. Substrate contacts are provided by residues 89–93, aspartate 143, glutamine 187, and glycine 214; that span reads DSGGF. Positions 245 to 251 are RNA binding; sequence GVGKPED. Aspartate 264 (nucleophile) is an active-site residue. The interval 269–273 is RNA binding; important for wobble base 34 recognition; sequence TRNAR. Zn(2+) contacts are provided by cysteine 302, cysteine 304, cysteine 307, and histidine 333.

It belongs to the queuine tRNA-ribosyltransferase family. Homodimer. Within each dimer, one monomer is responsible for RNA recognition and catalysis, while the other monomer binds to the replacement base PreQ1. It depends on Zn(2+) as a cofactor.

It catalyses the reaction 7-aminomethyl-7-carbaguanine + guanosine(34) in tRNA = 7-aminomethyl-7-carbaguanosine(34) in tRNA + guanine. It participates in tRNA modification; tRNA-queuosine biosynthesis. In terms of biological role, catalyzes the base-exchange of a guanine (G) residue with the queuine precursor 7-aminomethyl-7-deazaguanine (PreQ1) at position 34 (anticodon wobble position) in tRNAs with GU(N) anticodons (tRNA-Asp, -Asn, -His and -Tyr). Catalysis occurs through a double-displacement mechanism. The nucleophile active site attacks the C1' of nucleotide 34 to detach the guanine base from the RNA, forming a covalent enzyme-RNA intermediate. The proton acceptor active site deprotonates the incoming PreQ1, allowing a nucleophilic attack on the C1' of the ribose to form the product. After dissociation, two additional enzymatic reactions on the tRNA convert PreQ1 to queuine (Q), resulting in the hypermodified nucleoside queuosine (7-(((4,5-cis-dihydroxy-2-cyclopenten-1-yl)amino)methyl)-7-deazaguanosine). This is Queuine tRNA-ribosyltransferase from Salmonella agona (strain SL483).